Reading from the N-terminus, the 375-residue chain is Alanine racemase (375 aa).

Lysine 41 serves as the catalytic Proton acceptor; specific for D-alanine. Lysine 41 carries the post-translational modification N6-(pyridoxal phosphate)lysine. Residue arginine 141 participates in substrate binding. Tyrosine 270 acts as the Proton acceptor; specific for L-alanine in catalysis. Position 317 (methionine 317) interacts with substrate.

This sequence belongs to the alanine racemase family. Pyridoxal 5'-phosphate is required as a cofactor.

The catalysed reaction is L-alanine = D-alanine. The protein operates within amino-acid biosynthesis; D-alanine biosynthesis; D-alanine from L-alanine: step 1/1. Its function is as follows. Catalyzes the interconversion of L-alanine and D-alanine. May also act on other amino acids. This Lactiplantibacillus plantarum (strain ATCC BAA-793 / NCIMB 8826 / WCFS1) (Lactobacillus plantarum) protein is Alanine racemase (alr).